Reading from the N-terminus, the 1744-residue chain is Retrotransposon-like protein 1 (1744 aa).

Disordered stretches follow at residues 1 to 416 (MIEP…SPEE), 823 to 859 (READDETSDQPSSDGSDDLSESEPSELQQAGDSDQSG), and 1287 to 1439 (SSET…EVPS). The span at 19–30 (SSKQMESSEGSS) shows a compositional bias: low complexity. Polar residues predominate over residues 31-40 (NTVEETPGSS). The segment covering 41 to 80 (GAQAGAQAGAQAEAQAETQVEAQAEAQAEAQVEAQVEAQA) has biased composition (low complexity). Residues 269–318 (DGSNQESSDGSNHELSNGSNHESSFGSNPESSDVSNLESSGGSNQESSDG) are compositionally biased toward polar residues. The span at 332–361 (SDNSNQELSDNSNQESSDSSNQSSDISNQE) shows a compositional bias: low complexity. Acidic residues-rich tracts occupy residues 385-407 (SDQDDTDLGDDEEEEEEEGGEEE), 837-846 (GSDDLSESEP), and 1291-1437 (EDKE…DEEV). Transmembrane regions (helical) follow at residues 1473-1493 (FFRGLLYWKSLLGVAAVLVML) and 1520-1540 (LILDSTLIASSGMATAIAQLL).

Expressed in placenta and in various tissues in late-fetal stage.

It is found in the membrane. Its function is as follows. Plays an essential role in capillaries endothelial cells for the maintenance of feto-maternal interface and for development of the placenta. The protein is Retrotransposon-like protein 1 (Rtl1) of Mus musculus (Mouse).